A 217-amino-acid polypeptide reads, in one-letter code: Urease accessory protein UreG (217 aa).

Residue 13-20 (GPVGSGKT) participates in GTP binding.

It belongs to the SIMIBI class G3E GTPase family. UreG subfamily. In terms of assembly, homodimer. UreD, UreF and UreG form a complex that acts as a GTP-hydrolysis-dependent molecular chaperone, activating the urease apoprotein by helping to assemble the nickel containing metallocenter of UreC. The UreE protein probably delivers the nickel.

The protein localises to the cytoplasm. Functionally, facilitates the functional incorporation of the urease nickel metallocenter. This process requires GTP hydrolysis, probably effectuated by UreG. The polypeptide is Urease accessory protein UreG (Frankia alni (strain DSM 45986 / CECT 9034 / ACN14a)).